Consider the following 1138-residue polypeptide: Envelopment polyprotein (1138 aa).

The signal sequence occupies residues 1–18 (MEGWYLVVLGVCYTLTLA). At 19 to 487 (MPKTIYELKM…CVPGLHGWAT (469 aa)) the chain is on the lumenal side. Intrachain disulfides connect cysteine 30–cysteine 155, cysteine 64–cysteine 161, cysteine 113–cysteine 132, cysteine 137–cysteine 142, cysteine 179–cysteine 189, cysteine 214–cysteine 250, cysteine 239–cysteine 354, cysteine 379–cysteine 438, cysteine 383–cysteine 392, cysteine 408–cysteine 427, and cysteine 455–cysteine 478. Asparagine 138 carries an N-linked (GlcNAc...) asparagine; by host glycan. N-linked (GlcNAc...) asparagine; by host glycosylation is present at asparagine 350. A glycan (N-linked (GlcNAc...) asparagine; by host) is linked at asparagine 402. Residues 488 to 508 (VMLLSTFCFGWVLIPAVTLII) form a helical membrane-spanning segment. Residues 509–630 (LKCLRVLTFS…LGVFRYKSRC (122 aa)) lie on the Cytoplasmic side of the membrane. The binding to the ribonucleoprotein stretch occupies residues 519 to 536 (CSHYTNESKFKFILEKVK). 2 CCHC-type zinc fingers span residues 548–568 (CDVC…RQSC) and 573–594 (CPYC…YSIC). Binding to the ribonucleoprotein stretches follow at residues 591-608 (YSIC…KKSL), 595-606 (KLTGRFQEALKK), and 614-628 (KKGC…RYKS). An interaction with host TRAF3 region spans residues 610–637 (KPEVKKGCYRTLGVFRYKSRCYVGLVWC). The 24-residue stretch at 614 to 637 (KKGCYRTLGVFRYKSRCYVGLVWC) folds into the ITAM domain. Residues tyrosine 618 and tyrosine 631 each carry the phosphotyrosine modification. The YxxL motif lies at 618–621 (YRTL). Residues 631–651 (YVGLVWCLLLTCEIVIWAASA) form a helical membrane-spanning segment. Residues 652–1107 (ETPLMESGWS…EWLLGILNGN (456 aa)) are Lumenal-facing. 8 disulfide bridges follow: cysteine 738–cysteine 773, cysteine 742–cysteine 780, cysteine 754–cysteine 887, cysteine 768–cysteine 898, cysteine 783–cysteine 906, cysteine 809–cysteine 818, cysteine 826–cysteine 835, and cysteine 866–cysteine 870. The tract at residues 760-780 (YQYETGWGCNPGDCPGVGTGC) is fusion loop. N-linked (GlcNAc...) asparagine; by host glycosylation is present at asparagine 930. 5 cysteine pairs are disulfide-bonded: cysteine 972/cysteine 1002, cysteine 995/cysteine 1047, cysteine 1012/cysteine 1017, cysteine 1048/cysteine 1053, and cysteine 1087/cysteine 1091. The chain crosses the membrane as a helical span at residues 1108–1128 (WIVVVVLVVILILSIIMFSVL). Positions 1124-1138 (MFSVLCPRRGHKKTV) are binding to the ribonucleoprotein. Over 1129–1138 (CPRRGHKKTV) the chain is Cytoplasmic.

The protein belongs to the hantavirus envelope glycoprotein family. Homodimer. Homotetramer; forms heterotetrameric Gn-Gc spikes in the pre-fusion conformation. Interacts (via C-terminus) with the nucleoprotein. Interacts with host TUFM; this interaction contributes to the virus-induced degradation of mitochondria by autophagy, which leads to degradation of host MAVS and inhibition of type I interferon (IFN) responses. Interacts with host MAP1LC3B; this interaction contributes to the virus-induced degradation of mitochondria by autophagy, which leads to degradation of host MAVS and inhibition of type I interferon (IFN) responses. Interacts (via C-terminus) with host TRAF3; this interaction inhibits the formation of TRAF3-TBK1 complexes. In terms of assembly, homodimer. Homotetramer; forms heterotetrameric Gn-Gc spikes in the pre-fusion conformation. Homotrimer; forms homotrimer in the post-fusion conformation at acidic pH. Interacts (via C-terminus) with the nucleoprotein. Post-translationally, envelope polyprotein precursor is quickly cleaved in vivo just after synthesis, presumably by host signal peptidase.

The protein resides in the virion membrane. The protein localises to the host cell surface. It localises to the host Golgi apparatus membrane. It is found in the host endoplasmic reticulum membrane. Its subcellular location is the host mitochondrion. Functionally, forms homotetramers with glycoprotein C at the surface of the virion. Attaches the virion to host cell receptors including integrin ITGAV/ITGB3. This attachment induces virion internalization possibly through clathrin-dependent endocytosis and dynamin-independent macropinocytosis. Mediates the assembly and budding of infectious virus particles through its interaction with the nucleocapsid protein and the viral genome. May dysregulate normal immune and endothelial cell responses through an ITAM motif. Translocates to mitochondria, binds to host TUFM and recruits MAP1LC3B. These interactions induce mitochondrial autophagy and therefore destruction of host MAVS leading to inhibition of type I interferon (IFN) responses. Concomitant breakdown of glycoprotein N is apparently prevented by the nucleoprotein that may inhibit Gn-stimulated autophagosome-lysosome fusion. Interacts with the viral genomic RNA. Inhibits the host RIG-I/TBK1 pathway by disrupting the formation of TBK1-TRAF3 complexes and downstream signaling responses required for IFN-beta transcription. In terms of biological role, forms homotetramers with glycoprotein N at the surface of the virion. Attaches the virion to host cell receptors including integrin ITGAV/ITGB3. This attachment induces virion internalization predominantly through clathrin-dependent endocytosis. Class II fusion protein that promotes fusion of viral membrane with host endosomal membrane after endocytosis of the virion. The sequence is that of Envelopment polyprotein (GP) from Abrothrix longipilis (Long-haired grass mouse).